The chain runs to 308 residues: 1,4-dihydroxy-2-naphthoate octaprenyltransferase (308 aa).

Topologically, residues 1 to 20 (MTEQQISRTQAWLESLRPKT) are cytoplasmic. Residues 21–41 (LPLAFAAIIVGTALAWWQGHF) form a helical membrane-spanning segment. A topological domain (periplasmic) is located at residue D42. Residues 43–63 (PLVALLALITAGLLQILSNLA) traverse the membrane as a helical segment. The Cytoplasmic portion of the chain corresponds to 64 to 97 (NDYGDAVKGSDKPDRIGPLRGMQKGVITQQEMKR). The chain crosses the membrane as a helical span at residues 98–118 (ALIITVVLICLSGLALVAVAC). Residues 119–123 (HTLAD) lie on the Periplasmic side of the membrane. Residues 124–144 (FVGFLILGGLSIIAAITYTVG) traverse the membrane as a helical segment. Residues 145 to 148 (NRPY) are Cytoplasmic-facing. Residues 149–169 (GYIGLGDISVLVFFGWLSVMG) traverse the membrane as a helical segment. Topologically, residues 170–176 (SWYLQAH) are periplasmic. A helical membrane pass occupies residues 177–197 (TLIPALILPATACGLLATAVL). At 198 to 227 (NINNLRDINSDRENGKNTLVVRLGEVNARR) the chain is on the cytoplasmic side. A helical membrane pass occupies residues 228–247 (YHACLLMGSLVCLALFNLFS). The Periplasmic portion of the chain corresponds to 248 to 250 (LHS). Residues 251–270 (LWGWLFLLAAPLLVKQARYV) traverse the membrane as a helical segment. Topologically, residues 271–286 (MREMDPVAMRPMLERT) are cytoplasmic. Residues 287 to 307 (VKGALLTNLLFVLGIFLSQWA) form a helical membrane-spanning segment. A topological domain (periplasmic) is located at residue A308.

The protein belongs to the MenA family. Type 1 subfamily.

It localises to the cell inner membrane. It catalyses the reaction an all-trans-polyprenyl diphosphate + 1,4-dihydroxy-2-naphthoate + H(+) = a 2-demethylmenaquinol + CO2 + diphosphate. The protein operates within quinol/quinone metabolism; menaquinone biosynthesis; menaquinol from 1,4-dihydroxy-2-naphthoate: step 1/2. Functionally, conversion of 1,4-dihydroxy-2-naphthoate (DHNA) to demethylmenaquinone (DMK). Attaches octaprenylpyrophosphate, a membrane-bound 40-carbon side chain to DHNA. The conversion of DHNA to DMK proceeds in three stages: the removal of the carboxyl group of DHNA as CO(2), the attachment of the isoprenoid side chain, and a quinol-to-quinone oxidation, which is thought to be spontaneous. This chain is 1,4-dihydroxy-2-naphthoate octaprenyltransferase, found in Escherichia coli (strain K12).